We begin with the raw amino-acid sequence, 83 residues long: Evasin P1124 (83 aa).

An N-terminal signal peptide occupies residues 1-28 (MAVNVFTILQLAVFAAIVLNVNLHSVSA). 3 disulfides stabilise this stretch: C48–C66, C52–C68, and C62–C79. N51 is a glycosylation site (N-linked (GlcNAc...) asparagine).

The protein localises to the secreted. In terms of biological role, salivary chemokine-binding protein which binds to host chemokines CXCL1, CXCL2, CXCL3, CXCL5, CXCL6, CXCL12 and CXCL13. This is Evasin P1124 from Ixodes ricinus (Common tick).